We begin with the raw amino-acid sequence, 611 residues long: Leukotriene A-4 hydrolase (611 aa).

Lysine 73 carries the post-translational modification N6-acetyllysine. A peptide is bound by residues glutamine 135–glutamine 137 and proline 267–glutamate 272. Histidine 296 contributes to the Zn(2+) binding site. Glutamate 297 functions as the Proton acceptor in the catalytic mechanism. Positions 300 and 319 each coordinate Zn(2+). Position 337 is an N6-acetyllysine (lysine 337). Catalysis depends on tyrosine 384, which acts as the Proton donor. N6-acetyllysine is present on lysine 414. Serine 416 carries the phosphoserine modification. An a peptide-binding site is contributed by arginine 564–lysine 566. Lysine 573 carries the N6-acetyllysine modification.

The protein belongs to the peptidase M1 family. Monomer. It depends on Zn(2+) as a cofactor. In terms of processing, phosphorylation at Ser-416 inhibits leukotriene-A4 hydrolase activity.

It is found in the cytoplasm. The enzyme catalyses leukotriene A4 + H2O = leukotriene B4. It catalyses the reaction (5S,6S)-epoxy-(18R)-hydroxy-(7E,9E,11Z,14Z,16E)-eicosapentaenoate + H2O = resolvin E1. It carries out the reaction (5S,6S)-epoxy-(18S)-hydroxy-(7E,9E,11Z,14Z,16E)-eicosapentaenoate + H2O = 18S-resolvin E1. The catalysed reaction is Release of the N-terminal residue from a tripeptide.. The protein operates within lipid metabolism; leukotriene B4 biosynthesis. Inhibited by bestatin. Inhibited by captopril. The epoxide hydrolase activity is restrained by suicide inactivation that involves binding of LTA4 to Tyr-379. 4-(4-benzylphenyl)thiazol-2-amine (ARM1) selectively inhibits the epoxide hydrolase activity. Its function is as follows. Bifunctional zinc metalloenzyme that comprises both epoxide hydrolase (EH) and aminopeptidase activities. Acts as an epoxide hydrolase to catalyze the conversion of LTA4 to the pro-inflammatory mediator leukotriene B4 (LTB4). Also has aminopeptidase activity, with high affinity for N-terminal arginines of various synthetic tripeptides. In addition to its pro-inflammatory EH activity, may also counteract inflammation by its aminopeptidase activity, which inactivates by cleavage another neutrophil attractant, the tripeptide Pro-Gly-Pro (PGP), a bioactive fragment of collagen generated by the action of matrix metalloproteinase-9 (MMP9) and prolylendopeptidase (PREPL). Involved also in the biosynthesis of resolvin E1 and 18S-resolvin E1 from eicosapentaenoic acid, two lipid mediators that show potent anti-inflammatory and pro-resolving actions. The protein is Leukotriene A-4 hydrolase (Lta4h) of Rattus norvegicus (Rat).